Reading from the N-terminus, the 244-residue chain is 1-(5-phosphoribosyl)-5-[(5-phosphoribosylamino)methylideneamino] imidazole-4-carboxamide isomerase (244 aa).

Catalysis depends on aspartate 10, which acts as the Proton acceptor. The Proton donor role is filled by aspartate 132.

The protein belongs to the HisA/HisF family.

The protein localises to the cytoplasm. It carries out the reaction 1-(5-phospho-beta-D-ribosyl)-5-[(5-phospho-beta-D-ribosylamino)methylideneamino]imidazole-4-carboxamide = 5-[(5-phospho-1-deoxy-D-ribulos-1-ylimino)methylamino]-1-(5-phospho-beta-D-ribosyl)imidazole-4-carboxamide. It participates in amino-acid biosynthesis; L-histidine biosynthesis; L-histidine from 5-phospho-alpha-D-ribose 1-diphosphate: step 4/9. In Stenotrophomonas maltophilia (strain R551-3), this protein is 1-(5-phosphoribosyl)-5-[(5-phosphoribosylamino)methylideneamino] imidazole-4-carboxamide isomerase.